A 151-amino-acid chain; its full sequence is NADH-quinone oxidoreductase subunit I 2 (151 aa).

4Fe-4S ferredoxin-type domains lie at 49 to 82 and 93 to 122; these read PRLNINPDNGETLCISCNLCALACPENLIVVTSE and VTFTYDTSRCMFCGLCEDACPVDALELTQD. [4Fe-4S] cluster contacts are provided by Cys62, Cys65, Cys68, Cys72, Cys102, Cys105, Cys108, and Cys112.

It belongs to the complex I 23 kDa subunit family. NDH-1 is composed of 14 different subunits. Subunits NuoA, H, J, K, L, M, N constitute the membrane sector of the complex. The cofactor is [4Fe-4S] cluster.

The protein localises to the cell inner membrane. It catalyses the reaction a quinone + NADH + 5 H(+)(in) = a quinol + NAD(+) + 4 H(+)(out). NDH-1 shuttles electrons from NADH, via FMN and iron-sulfur (Fe-S) centers, to quinones in the respiratory chain. The immediate electron acceptor for the enzyme in this species is believed to be ubiquinone. Couples the redox reaction to proton translocation (for every two electrons transferred, four hydrogen ions are translocated across the cytoplasmic membrane), and thus conserves the redox energy in a proton gradient. In Solibacter usitatus (strain Ellin6076), this protein is NADH-quinone oxidoreductase subunit I 2.